Reading from the N-terminus, the 413-residue chain is Tyrosine--tRNA ligase 2 (413 aa).

The short motif at 58–67 (PSAPDVHLGH) is the 'HIGH' region element. 2 tandem repeats follow at residues 89-94 (GDFTGK) and 96-101 (GDPTGK). Residues 89–101 (GDFTGKIGDPTGK) form a 2 X 6 AA tandem repeats region. Residues 242-246 (KMSKS) carry the 'KMSKS' region motif. Lysine 245 contributes to the ATP binding site. The region spanning 353-413 (IAMIDLLVKL…VGKRKFLKLQ (61 aa)) is the S4 RNA-binding domain.

The protein belongs to the class-I aminoacyl-tRNA synthetase family. TyrS type 2 subfamily. In terms of assembly, homodimer.

Its subcellular location is the cytoplasm. The enzyme catalyses tRNA(Tyr) + L-tyrosine + ATP = L-tyrosyl-tRNA(Tyr) + AMP + diphosphate + H(+). In terms of biological role, catalyzes the attachment of tyrosine to tRNA(Tyr) in a two-step reaction: tyrosine is first activated by ATP to form Tyr-AMP and then transferred to the acceptor end of tRNA(Tyr). The polypeptide is Tyrosine--tRNA ligase 2 (Bacillus subtilis (strain 168)).